The sequence spans 851 residues: Protein BCK2 (851 aa).

Residues 1-10 (MPKNSHHHRS) are compositionally biased toward basic residues. 5 disordered regions span residues 1–91 (MPKN…RKKS), 233–271 (EVVPKSTHDPSLAKPPSRFTESETNSTPNLSSIPLMNTK), 315–355 (SLSL…LPEE), 466–504 (FLDGQPQHKSGSVKGGHRKKQESISDAQRIQHSNSYITT), and 698–722 (HASRSESNNNTGNRVSYSGSTPNNV). Low complexity predominate over residues 11-23 (SSVNSTKSRSTES). Residues 37–66 (ASGSTQASPDRNSSTGSCSTPVLPTMNVMS) show a composition bias toward polar residues. The span at 71-81 (VLLEDPRDNHT) shows a compositional bias: basic and acidic residues. Polar residues-rich tracts occupy residues 254–271 (SETNSTPNLSSIPLMNTK), 334–349 (SPRTSRSFNCGDSQSK), 489–504 (ISDAQRIQHSNSYITT), and 702–722 (SESNNNTGNRVSYSGSTPNNV). Phosphoserine is present on Ser-334. 2 positions are modified to phosphoserine: Ser-757 and Ser-761.

Its function is as follows. Dosage dependent suppressor of PKC1 deletion and MPK1 deletion. Involved in cell lysis. The chain is Protein BCK2 (BCK2) from Saccharomyces cerevisiae (strain ATCC 204508 / S288c) (Baker's yeast).